We begin with the raw amino-acid sequence, 264 residues long: NAD kinase (264 aa).

Residue Asp-45 is the Proton acceptor of the active site. NAD(+) contacts are provided by residues 45-46, 121-122, Arg-147, Asp-149, Ala-184, and Gln-221; these read DG and NE.

It belongs to the NAD kinase family. A divalent metal cation serves as cofactor.

The protein localises to the cytoplasm. The enzyme catalyses NAD(+) + ATP = ADP + NADP(+) + H(+). In terms of biological role, involved in the regulation of the intracellular balance of NAD and NADP, and is a key enzyme in the biosynthesis of NADP. Catalyzes specifically the phosphorylation on 2'-hydroxyl of the adenosine moiety of NAD to yield NADP. In Leuconostoc mesenteroides subsp. mesenteroides (strain ATCC 8293 / DSM 20343 / BCRC 11652 / CCM 1803 / JCM 6124 / NCDO 523 / NBRC 100496 / NCIMB 8023 / NCTC 12954 / NRRL B-1118 / 37Y), this protein is NAD kinase.